Reading from the N-terminus, the 122-residue chain is Large ribosomal subunit protein uL14 (122 aa).

It belongs to the universal ribosomal protein uL14 family. As to quaternary structure, part of the 50S ribosomal subunit. Forms a cluster with proteins L3 and L19. In the 70S ribosome, L14 and L19 interact and together make contacts with the 16S rRNA in bridges B5 and B8.

Its function is as follows. Binds to 23S rRNA. Forms part of two intersubunit bridges in the 70S ribosome. This chain is Large ribosomal subunit protein uL14, found in Streptococcus agalactiae serotype Ia (strain ATCC 27591 / A909 / CDC SS700).